The following is a 150-amino-acid chain: Thyroid hormone-inducible hepatic protein (150 aa).

Positions 83–104 are disordered; that stretch reads KVAGNETSEAENDAAETEEAEE. Position 90 is a phosphoserine (serine 90). Over residues 90–104 the composition is skewed to acidic residues; the sequence is SEAENDAAETEEAEE.

Belongs to the SPOT14 family. As to quaternary structure, homodimer. Heterodimer with MID1IP1. Interacts with THRB and PLAGL1. As to expression, mainly expressed in tissues that synthesize triglycerides.

The protein localises to the nucleus. It is found in the cytoplasm. Plays a role in the regulation of lipogenesis, especially in lactating mammary gland. Important for the biosynthesis of triglycerides with medium-length fatty acid chains. May modulate lipogenesis by interacting with MID1IP1 and preventing its interaction with ACACA. May function as transcriptional coactivator. May modulate the transcription factor activity of THRB. The sequence is that of Thyroid hormone-inducible hepatic protein (Thrsp) from Mus musculus (Mouse).